A 701-amino-acid chain; its full sequence is Polyribonucleotide nucleotidyltransferase (701 aa).

2 residues coordinate Mg(2+): Asp480 and Asp486. The 60-residue stretch at 547-606 (PKIDTIKIDVDKIKVVIGKGGETIDKIIAETGVKIDIDDEGNVSIYSSDQAAINRTKEII) folds into the KH domain. Residues 616-684 (GEVYHAKVVR…EKGRVDASMK (69 aa)) form the S1 motif domain. The tract at residues 682 to 701 (SMKALIPRPPKPEKKEEKHD) is disordered. Positions 691–701 (PKPEKKEEKHD) are enriched in basic and acidic residues.

It belongs to the polyribonucleotide nucleotidyltransferase family. Mg(2+) serves as cofactor.

It is found in the cytoplasm. It carries out the reaction RNA(n+1) + phosphate = RNA(n) + a ribonucleoside 5'-diphosphate. Its function is as follows. Involved in mRNA degradation. Catalyzes the phosphorolysis of single-stranded polyribonucleotides processively in the 3'- to 5'-direction. The protein is Polyribonucleotide nucleotidyltransferase of Streptococcus pyogenes serotype M12 (strain MGAS2096).